A 530-amino-acid chain; its full sequence is N-acetylmuramoyl-L-alanine amidase (530 aa).

The N-terminal stretch at 1-22 is a signal peptide; that stretch reads MKAWGALWIVLGLLLWPEPGAA. Asn61, Asn80, and Asn174 each carry an N-linked (GlcNAc...) asparagine glycan. Ser219 carries the post-translational modification Phosphoserine. N-linked (GlcNAc...) asparagine glycosylation is present at Asn335. Residues 386–512 form the N-acetylmuramoyl-L-alanine amidase domain; that stretch reads FLYVHHTYVP…RQLVLTHCPG (127 aa). His390 is a binding site for Zn(2+). A disulfide bridge connects residues Cys399 and Cys405. Asn465 carries N-linked (GlcNAc...) asparagine glycosylation. Positions 502 and 510 each coordinate Zn(2+).

The protein belongs to the N-acetylmuramoyl-L-alanine amidase 2 family. It depends on Zn(2+) as a cofactor. As to expression, strongly expressed in liver and fetal liver.

Its subcellular location is the secreted. It is found in the membrane. It catalyses the reaction Hydrolyzes the link between N-acetylmuramoyl residues and L-amino acid residues in certain cell-wall glycopeptides.. May play a scavenger role by digesting biologically active peptidoglycan (PGN) into biologically inactive fragments. Has no direct bacteriolytic activity. The polypeptide is N-acetylmuramoyl-L-alanine amidase (Pglyrp2) (Mus musculus (Mouse)).